Reading from the N-terminus, the 148-residue chain is 3-dehydroquinate dehydratase (148 aa).

Y23 serves as the catalytic Proton acceptor. Substrate-binding residues include N75, H81, and D88. The Proton donor role is filled by H101. Substrate contacts are provided by residues 102 to 103 and R112; that span reads LS.

The protein belongs to the type-II 3-dehydroquinase family. In terms of assembly, homododecamer.

It catalyses the reaction 3-dehydroquinate = 3-dehydroshikimate + H2O. It functions in the pathway metabolic intermediate biosynthesis; chorismate biosynthesis; chorismate from D-erythrose 4-phosphate and phosphoenolpyruvate: step 3/7. In terms of biological role, catalyzes a trans-dehydration via an enolate intermediate. The protein is 3-dehydroquinate dehydratase of Halorhodospira halophila (strain DSM 244 / SL1) (Ectothiorhodospira halophila (strain DSM 244 / SL1)).